A 228-amino-acid polypeptide reads, in one-letter code: Auxin-responsive protein IAA14 (228 aa).

The EAR-like (transcriptional repression) motif lies at 8-12 (LCLGL). The PB1 domain occupies 110-210 (VAFVKVSMDG…SCKRLRIMKG (101 aa)).

It belongs to the Aux/IAA family. In terms of assembly, homodimers and heterodimers. Interacts with TPL. Preferentially expressed in roots and flowers.

It localises to the nucleus. Aux/IAA proteins are short-lived transcriptional factors that function as repressors of early auxin response genes at low auxin concentrations. Repression is thought to result from the interaction with auxin response factors (ARFs), proteins that bind to the auxin-responsive promoter element (AuxRE). Formation of heterodimers with ARF proteins may alter their ability to modulate early auxin response genes expression. This is Auxin-responsive protein IAA14 (IAA14) from Arabidopsis thaliana (Mouse-ear cress).